We begin with the raw amino-acid sequence, 140 residues long: Peptide methionine sulfoxide reductase MsrB (140 aa).

Positions aspartate 9–glutamate 131 constitute a MsrB domain. Positions 48, 51, 97, and 100 each coordinate Zn(2+). The active-site Nucleophile is cysteine 120.

This sequence belongs to the MsrB Met sulfoxide reductase family. The cofactor is Zn(2+).

The catalysed reaction is L-methionyl-[protein] + [thioredoxin]-disulfide + H2O = L-methionyl-(R)-S-oxide-[protein] + [thioredoxin]-dithiol. This chain is Peptide methionine sulfoxide reductase MsrB, found in Cellvibrio japonicus (strain Ueda107) (Pseudomonas fluorescens subsp. cellulosa).